A 440-amino-acid polypeptide reads, in one-letter code: Light-independent protochlorophyllide reductase subunit B (440 aa).

Asp-36 lines the [4Fe-4S] cluster pocket. Residue 427-428 (KD) coordinates substrate.

Belongs to the ChlB/BchB/BchZ family. In terms of assembly, protochlorophyllide reductase is composed of three subunits; ChlL, ChlN and ChlB. Forms a heterotetramer of two ChlB and two ChlN subunits. The cofactor is [4Fe-4S] cluster.

Its subcellular location is the plastid. The protein localises to the cyanelle. It carries out the reaction chlorophyllide a + oxidized 2[4Fe-4S]-[ferredoxin] + 2 ADP + 2 phosphate = protochlorophyllide a + reduced 2[4Fe-4S]-[ferredoxin] + 2 ATP + 2 H2O. It participates in porphyrin-containing compound metabolism; chlorophyll biosynthesis (light-independent). In terms of biological role, component of the dark-operative protochlorophyllide reductase (DPOR) that uses Mg-ATP and reduced ferredoxin to reduce ring D of protochlorophyllide (Pchlide) to form chlorophyllide a (Chlide). This reaction is light-independent. The NB-protein (ChlN-ChlB) is the catalytic component of the complex. The protein is Light-independent protochlorophyllide reductase subunit B of Cyanophora paradoxa.